The following is a 120-amino-acid chain: MIQRESRLVVADNSGAKEVLVIGILGGTRRSHVNIGDIVVVTVKSGSGTVKKHDVLKAVIVRTKKGLRRKNGSYIKFDDNAVVLLKEDLNIIGTRIFGPVVRELSDKKFSKIVSLAQLVL.

It belongs to the universal ribosomal protein uL14 family. In terms of assembly, part of the 50S ribosomal subunit. Forms a cluster with proteins L3 and L19. In the 70S ribosome, L14 and L19 interact and together make contacts with the 16S rRNA in bridges B5 and B8.

Functionally, binds to 23S rRNA. Forms part of two intersubunit bridges in the 70S ribosome. This is Large ribosomal subunit protein uL14 from Aster yellows witches'-broom phytoplasma (strain AYWB).